A 295-amino-acid polypeptide reads, in one-letter code: Probable CBASS effector molecule IK1_05631 (295 aa).

The next 4 helical transmembrane spans lie at 26-46, 56-76, 167-187, and 190-210; these read IFYA…ISIY, SNTG…AYQI, ILLF…GFFV, and SMQE…IYGF.

The protein resides in the cell membrane. Its function is as follows. Effector protein of a CBASS antiviral system. CBASS (cyclic oligonucleotide-based antiphage signaling system) provides immunity against bacteriophage. The CD-NTase protein synthesizes cyclic nucleotides in response to infection; these serve as specific second messenger signals. The signals activate a diverse range of effectors, leading to bacterial cell death and thus abortive phage infection. A type I-B CBASS system. Functionally, protects B.subtilis against phage infection. When IK1_05630 and IK1_05631 are introduced in B.subtilis BEST7003 there is 1000-fold protection against phage SBSphiC. Both genes are required for protection. Activation leads to bacterial cell lysis and death, which occurs before the phage has finished its replication cycle, thus protecting non-infected bacteria by aborting the phage infection and preventing its propagation. This Bacillus cereus (strain VD146) protein is Probable CBASS effector molecule IK1_05631.